Consider the following 354-residue polypeptide: Guanine nucleotide-binding protein G(q) subunit alpha (354 aa).

2 S-palmitoyl cysteine lipidation sites follow: Cys-3 and Cys-4. In terms of domain architecture, G-alpha spans 32-354 (RELKLLLLGT…QLNLKEYNLV (323 aa)). Positions 35 to 48 (KLLLLGTGESGKST) are G1 motif. GTP contacts are provided by residues 40 to 47 (GTGESGKS), 174 to 180 (LRVRVPT), 199 to 203 (DVGGQ), 269 to 272 (NKKD), and Ala-326. Mg(2+)-binding residues include Ser-47 and Thr-180. The tract at residues 172–180 (DILRVRVPT) is G2 motif. The G3 motif stretch occupies residues 195–204 (FRMVDVGGQR). The tract at residues 265-272 (ILFLNKKD) is G4 motif. The tract at residues 324-329 (TCATDT) is G5 motif.

The protein belongs to the G-alpha family. G(q) subfamily. As to quaternary structure, g proteins are composed of 3 units; alpha, beta and gamma. The alpha chain contains the guanine nucleotide binding site. As to expression, a high concentration was found in the retinal light-sensitive outer segment.

In terms of biological role, guanine nucleotide-binding proteins (G proteins) are involved as modulators or transducers in various transmembrane signaling systems. Its function is as follows. The G(q) alpha subunit is involved in the light-dependent activation of phospholipase C. This Loligo forbesii (Veined squid) protein is Guanine nucleotide-binding protein G(q) subunit alpha.